The sequence spans 615 residues: Protein ENHANCED DISEASE RESISTANCE 4 (615 aa).

Disordered stretches follow at residues 46-271 (IAPS…DDDE), 292-336 (YKEQ…GRQG), and 549-592 (THDI…RGSP). Polar residues-rich tracts occupy residues 63–89 (NEPQSVPETNNVSSSSGQDTVLPSSPG) and 119–129 (GDGTNEIQEQE). The stretch at 104 to 129 (MESTEKELDDLELSNGDGTNEIQEQE) forms a coiled coil. Positions 134 to 148 (DSEKNEREDNSRLES) are enriched in basic and acidic residues. Low complexity predominate over residues 159–168 (GSGSSSGSLS). Polar residues-rich tracts occupy residues 296–314 (GASSSSPFSENRRNGITTY) and 552–564 (INANRNSNSTSES). Over residues 565 to 577 (PIDKAPSKPEKLR) the composition is skewed to basic and acidic residues.

In terms of assembly, interacts with RLK902. Binds and recruits EDR1 at the powdery mildew (e.g. G.cichoracearum) penetration site on the plasma membrane. Interacts with CHC2. As to expression, expressed in stems and rosette leaves, and weakly in inflorescences. Not detected in roots.

Its subcellular location is the cell membrane. It is found in the endosome. Plays a negative role in salicylic acid (SA)-mediated resistance to powdery mildew (e.g. Golovinomyces cichoracearum). May modulate plant immunity by regulating the relocation of EDR1 by interacting with CHC2 and modulating endocytosis. The chain is Protein ENHANCED DISEASE RESISTANCE 4 from Arabidopsis thaliana (Mouse-ear cress).